The chain runs to 203 residues: Small ribosomal subunit protein uS3 (203 aa).

Positions 39-113 (IREIIRRNFL…NHVLNAKNIA (75 aa)) constitute a KH type-2 domain.

Belongs to the universal ribosomal protein uS3 family. As to quaternary structure, part of the 30S ribosomal subunit. Forms a tight complex with proteins S10 and S14.

Binds the lower part of the 30S subunit head. Binds mRNA in the 70S ribosome, positioning it for translation. The protein is Small ribosomal subunit protein uS3 of Carsonella ruddii.